We begin with the raw amino-acid sequence, 195 residues long: Peptidyl-tRNA hydrolase (195 aa).

Tyr-17 is a binding site for tRNA. Catalysis depends on His-22, which acts as the Proton acceptor. 3 residues coordinate tRNA: Tyr-68, Asn-70, and Asn-116.

This sequence belongs to the PTH family. As to quaternary structure, monomer.

It localises to the cytoplasm. The catalysed reaction is an N-acyl-L-alpha-aminoacyl-tRNA + H2O = an N-acyl-L-amino acid + a tRNA + H(+). In terms of biological role, hydrolyzes ribosome-free peptidyl-tRNAs (with 1 or more amino acids incorporated), which drop off the ribosome during protein synthesis, or as a result of ribosome stalling. Catalyzes the release of premature peptidyl moieties from peptidyl-tRNA molecules trapped in stalled 50S ribosomal subunits, and thus maintains levels of free tRNAs and 50S ribosomes. In Shewanella putrefaciens (strain CN-32 / ATCC BAA-453), this protein is Peptidyl-tRNA hydrolase.